Reading from the N-terminus, the 387-residue chain is Cysteine desulfurase IscS (387 aa).

Pyridoxal 5'-phosphate-binding positions include 73 to 74 (AT), asparagine 155, glutamine 183, and 203 to 205 (SAH). An N6-(pyridoxal phosphate)lysine modification is found at lysine 206. Threonine 241 provides a ligand contact to pyridoxal 5'-phosphate. The Cysteine persulfide intermediate role is filled by cysteine 328. Position 328 (cysteine 328) interacts with [2Fe-2S] cluster.

Belongs to the class-V pyridoxal-phosphate-dependent aminotransferase family. NifS/IscS subfamily. As to quaternary structure, homodimer. Forms a heterotetramer with IscU, interacts with other sulfur acceptors. Pyridoxal 5'-phosphate serves as cofactor.

Its subcellular location is the cytoplasm. The enzyme catalyses (sulfur carrier)-H + L-cysteine = (sulfur carrier)-SH + L-alanine. Its pathway is cofactor biosynthesis; iron-sulfur cluster biosynthesis. Master enzyme that delivers sulfur to a number of partners involved in Fe-S cluster assembly, tRNA modification or cofactor biosynthesis. Catalyzes the removal of elemental sulfur atoms from cysteine to produce alanine. Functions as a sulfur delivery protein for Fe-S cluster synthesis onto IscU, an Fe-S scaffold assembly protein, as well as other S acceptor proteins. This Helicobacter pylori (strain J99 / ATCC 700824) (Campylobacter pylori J99) protein is Cysteine desulfurase IscS.